We begin with the raw amino-acid sequence, 375 residues long: Coproporphyrin III ferrochelatase (375 aa).

Positions 59 and 128 each coordinate Fe-coproporphyrin III. 2 residues coordinate Fe(2+): H191 and E286.

It belongs to the ferrochelatase family.

Its subcellular location is the cytoplasm. It catalyses the reaction Fe-coproporphyrin III + 2 H(+) = coproporphyrin III + Fe(2+). Its pathway is porphyrin-containing compound metabolism; protoheme biosynthesis. Its function is as follows. Involved in coproporphyrin-dependent heme b biosynthesis. Catalyzes the insertion of ferrous iron into coproporphyrin III to form Fe-coproporphyrin III. This chain is Coproporphyrin III ferrochelatase, found in Streptomyces coelicolor (strain ATCC BAA-471 / A3(2) / M145).